The sequence spans 211 residues: ATP phosphoribosyltransferase (211 aa).

The protein belongs to the ATP phosphoribosyltransferase family. Short subfamily. As to quaternary structure, heteromultimer composed of HisG and HisZ subunits.

It is found in the cytoplasm. The catalysed reaction is 1-(5-phospho-beta-D-ribosyl)-ATP + diphosphate = 5-phospho-alpha-D-ribose 1-diphosphate + ATP. It functions in the pathway amino-acid biosynthesis; L-histidine biosynthesis; L-histidine from 5-phospho-alpha-D-ribose 1-diphosphate: step 1/9. Its function is as follows. Catalyzes the condensation of ATP and 5-phosphoribose 1-diphosphate to form N'-(5'-phosphoribosyl)-ATP (PR-ATP). Has a crucial role in the pathway because the rate of histidine biosynthesis seems to be controlled primarily by regulation of HisG enzymatic activity. The chain is ATP phosphoribosyltransferase from Pseudomonas syringae pv. tomato (strain ATCC BAA-871 / DC3000).